Reading from the N-terminus, the 162-residue chain is Functional amyloid chaperone FapA (162 aa).

A signal peptide spans 1–28 (MSGSSLRIVVPALLVIVGSVPVSLPAHA).

It belongs to the FapA family. In terms of assembly, monomer in solution. Interacts with FapC but not FapB in vitro.

The protein localises to the periplasm. An intrinsically disordered chaperone for fibril amyloid FapC that guards against fibrillation within the periplasm. Upon overexpression of the endogenous six-gene locus (fapA-fapF), cells form large clumps during liquid growth, make large amounts of biofilm and produce amyloid fibrils. The protein is Functional amyloid chaperone FapA of Pseudomonas aeruginosa (strain ATCC 15692 / DSM 22644 / CIP 104116 / JCM 14847 / LMG 12228 / 1C / PRS 101 / PAO1).